Reading from the N-terminus, the 363-residue chain is MQSTVVPPGGLVLITGVNGFLASHLALQLIQRGYMVKGTVRTAESASWITEAIMRRHPTGKFQAVVIPILSASGVMDDLVKDVDGIAYVAADTSLNPDPDQVITPGLEALKVALQSATQTQSVKRFVLTSSYTAAVDTFVPSAPDALITRDSWNQTSTPRAWAPPPYDALRALDVYQSLKTESETLFWKFASEAKPSFIQNSVLPGFVVGPIIHRKQRGSTAALVKAYFDDVTCNQAFAWISAPWVVDVVDNALLHLAGLIDEDVQNERLLALAEPFKLGNFARVFEQIDPSRSWPAGDNKHGVKDEGGTKWVADTKRSVAILQRLGQDEGFTPFLESVRRTCLDSDPAWTFGNFLPKSDSQE.

A helical membrane pass occupies residues 10-30; the sequence is GLVLITGVNGFLASHLALQLI. Residue tyrosine 176 participates in NADP(+) binding.

It belongs to the NAD(P)-dependent epimerase/dehydratase family. Dihydroflavonol-4-reductase subfamily.

It localises to the membrane. Its pathway is secondary metabolite biosynthesis; terpenoid biosynthesis. Its function is as follows. NAD-dependent epimerase/dehydratase; part of the gene cluster that mediates the biosynthesis of talaronoid C, a fusicoccane diterpenoid with an unprecedented tricyclic 5/8/6 ring system. The first step in the pathway is performed by the fusicoccadiene synthase tndC that possesses both prenyl transferase and terpene cyclase activity, converting isopentenyl diphosphate and dimethylallyl diphosphate into geranylgeranyl diphosphate (GGDP) and further converting GGDP into talarodiene, a precursor for talaronoid C. The remaining enzymes from the cluster include the cytochrome P450 monooxygenase tndB, the aldehyde reductase tndE and the alcohol dehydrogenase tndF that are involved in the conversion of talarodiene into talaronoid C. In Aspergillus flavipes, this protein is NAD-dependent epimerase/dehydratase tndE.